The sequence spans 473 residues: Calcium/calmodulin-dependent protein kinase type IV (473 aa).

Residues Ser12 and Ser13 each carry the phosphoserine; by autocatalysis modification. The Protein kinase domain maps to 46-300; it reads FEVESELGRG…TFQALQHPWV (255 aa). Residues 52–60 and Lys75 contribute to the ATP site; that span reads LGRGATSIV. Thr57 carries O-linked (GlcNAc) threonine glycosylation. An O-linked (GlcNAc) serine glycan is attached at Ser58. An O-linked (GlcNAc) serine glycan is attached at Ser137. Asp164 serves as the catalytic Proton acceptor. Ser189 is a glycosylation site (O-linked (GlcNAc) serine). A Phosphothreonine; by CaMKK1 and CaMKK2 modification is found at Thr200. Positions 305–321 are autoinhibitory domain; it reads ANFVHMDTAQKKLQEFN. Positions 306-323 are PP2A-binding; the sequence is NFVHMDTAQKKLQEFNAR. The tract at residues 322–341 is calmodulin-binding; sequence ARRKLKAAVKAVVASSRLGS. Phosphoserine; by autocatalysis is present on Ser336. Residue Ser341 is modified to Phosphoserine. A compositionally biased stretch (low complexity) spans 341–350; the sequence is SASSSHGSIQ. 2 disordered regions span residues 341–368 and 445–473; these read SASS…GNED and EEAA…LPEY. O-linked (GlcNAc) serine glycosylation is found at Ser344, Ser345, and Ser356. A Phosphoserine modification is found at Ser360.

It belongs to the protein kinase superfamily. CAMK Ser/Thr protein kinase family. CaMK subfamily. In terms of assembly, monomer. Interacts with protein phosphatase 2A (PPP2CA/PPP2CB); the interaction is mutually exclusive with binding to Ca(2+)/calmodulin. Phosphorylated by CaMKK1 and CaMKK2 on Thr-200. Dephosphorylated by protein phosphatase 2A. Autophosphorylated on Ser-12 and Ser-13. In terms of processing, glycosylation at Ser-189 modulates the phosphorylation of CaMK4 at Thr-200 and negatively regulates its activity toward CREB1 in basal conditions and during early inomycin stimulation. As to expression, expressed in brain, thymus, CD4 T-cells, testis and epithelial ovarian cancer tissue.

The protein localises to the cytoplasm. It localises to the nucleus. The enzyme catalyses L-seryl-[protein] + ATP = O-phospho-L-seryl-[protein] + ADP + H(+). The catalysed reaction is L-threonyl-[protein] + ATP = O-phospho-L-threonyl-[protein] + ADP + H(+). Its activity is regulated as follows. Activated by Ca(2+)/calmodulin. Binding of calmodulin results in conformational change that relieves intrasteric autoinhibition and allows phosphorylation of Thr-200 within the activation loop by CaMKK1 or CaMKK2. Phosphorylation of Thr-200 results in a 10-20-fold increase in total activity to generate Ca(2+)/calmodulin-independent activity. Autophosphorylation of the N-terminus Ser-12 and Ser-13 is required for full activation. Inactivated by protein phosphatase 2A (PPP2CA/PPP2CB) which dephosphorylates Thr-200, thereby terminating autonomous activity and helping to maintain the enzyme in its autoinhibited state. Functionally, calcium/calmodulin-dependent protein kinase that operates in the calcium-triggered CaMKK-CaMK4 signaling cascade and regulates, mainly by phosphorylation, the activity of several transcription activators, such as CREB1, MEF2D, JUN and RORA, which play pivotal roles in immune response, inflammation, and memory consolidation. In the thymus, regulates the CD4(+)/CD8(+) double positive thymocytes selection threshold during T-cell ontogeny. In CD4 memory T-cells, is required to link T-cell antigen receptor (TCR) signaling to the production of IL2, IFNG and IL4 (through the regulation of CREB and MEF2). Regulates the differentiation and survival phases of osteoclasts and dendritic cells (DCs). Mediates DCs survival by linking TLR4 and the regulation of temporal expression of BCL2. Phosphorylates the transcription activator CREB1 on 'Ser-133' in hippocampal neuron nuclei and contribute to memory consolidation and long term potentiation (LTP) in the hippocampus. Can activate the MAP kinases MAPK1/ERK2, MAPK8/JNK1 and MAPK14/p38 and stimulate transcription through the phosphorylation of ELK1 and ATF2. Can also phosphorylate in vitro CREBBP, PRM2, MEF2A and STMN1/OP18. In Homo sapiens (Human), this protein is Calcium/calmodulin-dependent protein kinase type IV (CAMK4).